The following is a 358-amino-acid chain: tRNA-specific 2-thiouridylase MnmA (358 aa).

Residues 6-13 (ALSGGVDS) and M32 each bind ATP. Residue C103 is the Nucleophile of the active site. C103 and C201 are disulfide-bonded. G127 serves as a coordination point for ATP. Positions 151–153 (KDQ) are interaction with tRNA. C201 serves as the catalytic Cysteine persulfide intermediate.

Belongs to the MnmA/TRMU family.

The protein localises to the cytoplasm. It carries out the reaction S-sulfanyl-L-cysteinyl-[protein] + uridine(34) in tRNA + AH2 + ATP = 2-thiouridine(34) in tRNA + L-cysteinyl-[protein] + A + AMP + diphosphate + H(+). Its function is as follows. Catalyzes the 2-thiolation of uridine at the wobble position (U34) of tRNA, leading to the formation of s(2)U34. The sequence is that of tRNA-specific 2-thiouridylase MnmA from Thermotoga maritima (strain ATCC 43589 / DSM 3109 / JCM 10099 / NBRC 100826 / MSB8).